Consider the following 1226-residue polypeptide: Probable DNA-binding protein SNT1 (1226 aa).

Disordered regions lie at residues Met1–Ser219 and Leu264–Ile331. A compositionally biased stretch (basic residues) spans Gly11–Pro27. Residues Tyr31 to Ser64 show a composition bias toward polar residues. 2 stretches are compositionally biased toward low complexity: residues Pro81–Arg103 and Ser116–Thr131. 2 stretches are compositionally biased toward polar residues: residues Ile132 to Arg143 and Ser150 to Ser170. Ser187 bears the Phosphoserine mark. Residues Asn202–Ser211 show a composition bias toward low complexity. Positions Leu264–Leu275 are enriched in polar residues. The span at Phe280 to Lys304 shows a compositional bias: basic and acidic residues. Ser395 carries the phosphoserine modification. Residues Asp539 to Arg591 adopt a coiled-coil conformation. Basic and acidic residues predominate over residues Glu569–Leu590. The disordered stretch occupies residues Glu569 to Ala605. In terms of domain architecture, SANT spans Asp668 to Asn720. Basic residues predominate over residues Arg732–Glu745. The segment at Arg732 to Thr796 is disordered. Residues Asn748 to Lys758 are compositionally biased toward acidic residues. Basic and acidic residues predominate over residues Glu759 to Asn773. Thr796 bears the Phosphothreonine mark. An HTH myb-type domain is found at Ala884–Gly938. Positions Trp911–Ala934 form a DNA-binding region, H-T-H motif. Position 1037 is a phosphoserine (Ser1037). The tract at residues Ser1172–Lys1194 is disordered.

Identified in a Set3C complex with SET3, HST1, HOS2, SIF2, CPR1 and HOS4.

It is found in the nucleus. In terms of biological role, part of the Set3C complex, which is required to repress early/middle sporulation genes during meiosis. In Saccharomyces cerevisiae (strain ATCC 204508 / S288c) (Baker's yeast), this protein is Probable DNA-binding protein SNT1 (SNT1).